A 204-amino-acid polypeptide reads, in one-letter code: Small ribosomal subunit protein uS4 (204 aa).

The tract at residues 1–49 (MSKRKSAKYKLDRRMGENIWGRPNSPVNKRSYGPGQHGQRRKGKTSDFG) is disordered. Residues 94-154 (QRLDMVVYRA…NKAKEMALVI (61 aa)) enclose the S4 RNA-binding domain.

Belongs to the universal ribosomal protein uS4 family. As to quaternary structure, part of the 30S ribosomal subunit. Contacts protein S5. The interaction surface between S4 and S5 is involved in control of translational fidelity.

In terms of biological role, one of the primary rRNA binding proteins, it binds directly to 16S rRNA where it nucleates assembly of the body of the 30S subunit. Functionally, with S5 and S12 plays an important role in translational accuracy. This Erythrobacter litoralis (strain HTCC2594) protein is Small ribosomal subunit protein uS4.